Consider the following 55-residue polypeptide: Large ribosomal subunit protein bL33 (55 aa).

It belongs to the bacterial ribosomal protein bL33 family.

The polypeptide is Large ribosomal subunit protein bL33 (Rhodopseudomonas palustris (strain BisA53)).